Here is a 151-residue protein sequence, read N- to C-terminus: Large ribosomal subunit protein uL13 (151 aa).

Belongs to the universal ribosomal protein uL13 family. As to quaternary structure, part of the 50S ribosomal subunit.

Functionally, this protein is one of the early assembly proteins of the 50S ribosomal subunit, although it is not seen to bind rRNA by itself. It is important during the early stages of 50S assembly. The chain is Large ribosomal subunit protein uL13 from Mycoplasma mycoides subsp. mycoides SC (strain CCUG 32753 / NCTC 10114 / PG1).